Here is a 260-residue protein sequence, read N- to C-terminus: Type III pantothenate kinase (260 aa).

An ATP-binding site is contributed by 6–13 (DAGNTNIV). 108–111 (GADR) lines the substrate pocket. Aspartate 110 (proton acceptor) is an active-site residue. Aspartate 130 is a K(+) binding site. Threonine 133 is a binding site for ATP. Position 187 (threonine 187) interacts with substrate.

Belongs to the type III pantothenate kinase family. Homodimer. Requires NH4(+) as cofactor. K(+) is required as a cofactor.

The protein localises to the cytoplasm. It carries out the reaction (R)-pantothenate + ATP = (R)-4'-phosphopantothenate + ADP + H(+). Its pathway is cofactor biosynthesis; coenzyme A biosynthesis; CoA from (R)-pantothenate: step 1/5. Its function is as follows. Catalyzes the phosphorylation of pantothenate (Pan), the first step in CoA biosynthesis. This is Type III pantothenate kinase from Rhizorhabdus wittichii (strain DSM 6014 / CCUG 31198 / JCM 15750 / NBRC 105917 / EY 4224 / RW1) (Sphingomonas wittichii).